Reading from the N-terminus, the 195-residue chain is dCTP deaminase (195 aa).

DCTP contacts are provided by residues R110 to R115, D128, V136 to E138, Y171, K178, and Q182. Catalysis depends on E138, which acts as the Proton donor/acceptor. Positions R169 to Y179 are enriched in basic and acidic residues. Residues R169–E195 are disordered.

This sequence belongs to the dCTP deaminase family. Homotrimer.

The catalysed reaction is dCTP + H2O + H(+) = dUTP + NH4(+). Its pathway is pyrimidine metabolism; dUMP biosynthesis; dUMP from dCTP (dUTP route): step 1/2. In terms of biological role, catalyzes the deamination of dCTP to dUTP. In Haemophilus influenzae (strain 86-028NP), this protein is dCTP deaminase.